Consider the following 245-residue polypeptide: Dehydrogenase/reductase SDR family member 6 (245 aa).

NAD(+) is bound by residues 16-18 (QGI), Asp37, and Asp58. Arg144 serves as a coordination point for substrate. Catalysis depends on Tyr147, which acts as the Proton acceptor. NAD(+) is bound by residues Lys151 and 180–184 (VDTPS). Arg188 and Arg205 together coordinate substrate.

Belongs to the short-chain dehydrogenases/reductases (SDR) family. In terms of assembly, homotetramer. In terms of tissue distribution, detected in liver (at protein level).

The protein localises to the cytoplasm. The enzyme catalyses cis-4-hydroxy-L-proline + NAD(+) = 4-oxo-L-proline + NADH + H(+). It carries out the reaction (R)-3-hydroxybutanoate + NAD(+) = acetoacetate + NADH + H(+). It functions in the pathway amino-acid metabolism. The protein operates within siderophore biosynthesis. Its function is as follows. NAD(H)-dependent dehydrogenase/reductase with a preference for cyclic substrates. Catalyzes stereoselective conversion of 4-oxo-L-proline to cis-4-hydroxy-L-proline, likely a detoxification mechanism for ketoprolines. Mediates the formation of 2,5-dihydroxybenzoate (2,5-DHBA), a siderophore that chelates free cytoplasmic iron and associates with LCN2, thereby regulating iron transport and homeostasis while protecting cells against free radical-induced oxidative stress. The iron-siderophore complex is imported into mitochondria, providing an iron source for mitochondrial metabolic processes in particular heme synthesis. May act as a 3-hydroxybutyrate dehydrogenase. This chain is Dehydrogenase/reductase SDR family member 6, found in Homo sapiens (Human).